Consider the following 150-residue polypeptide: Major facilitator superfamily domain-containing 14C pseudogene (150 aa).

The segment at 1 to 25 (MSVEPPPELEEKAASEPEAGAMPEK) is disordered. Topologically, residues 1 to 49 (MSVEPPPELEEKAASEPEAGAMPEKRAGAQAAGSTWLQGFGPPSVYHAA) are extracellular. Residues 50 to 70 (IVIFLEFFAWGLLTTPMLTVL) traverse the membrane as a helical segment. Residues 71-82 (HETFSQHTFLMN) lie on the Cytoplasmic side of the membrane. Residues 83-103 (GLIQGVKGLLSFLSAPLIGAL) traverse the membrane as a helical segment. Residues 104 to 111 (SDVWGRKP) are Extracellular-facing. The chain crosses the membrane as a helical span at residues 112-132 (FLLGTVFFTCFPIPLMRISPC). The Cytoplasmic segment spans residues 133–150 (RVWWRAPVVPATCGRRMA).

Belongs to the major facilitator superfamily.

It is found in the membrane. This chain is Major facilitator superfamily domain-containing 14C pseudogene, found in Homo sapiens (Human).